Reading from the N-terminus, the 331-residue chain is Centriolar satellite-associated tubulin polyglutamylase complex regulator 1 (331 aa).

A disordered region spans residues 283–331 (PTSNNNSSSSALGQKEMSKKASPRKSLHQRKRIEMESDGSTEETDSSEN). Residues 303–313 (ASPRKSLHQRK) show a composition bias toward basic residues. A compositionally biased stretch (acidic residues) spans 318–331 (ESDGSTEETDSSEN).

This sequence belongs to the CSTPP1 family. Interacts with PCM1. Interacts with the complex TPGC. Binds to alpha-tubulin. Expression in elevated in ciliated tissues/organs, including brain, spinal cord, kidney, eyes, ears and lateral line.

Its subcellular location is the cytoplasm. It localises to the cytoskeleton. It is found in the microtubule organizing center. The protein resides in the centrosome. The protein localises to the centriolar satellite. Functionally, regulator of the tubulin polyglutamylase complex (TPGC) that controls cytoskeletal organization, nuclear shape, and cilium disassembly by balancing microtubule and actin assembly. Regulates the assembly and stability of the TPGC and thereby modulates polyglutamylation of the microtubule, which antagonizes MAP4 binding. The protein is Centriolar satellite-associated tubulin polyglutamylase complex regulator 1 (cstpp1) of Danio rerio (Zebrafish).